The sequence spans 657 residues: MESDSNIAIEEVKYPNILLEPVYYNNLEVIGSHLHKPDKNNLCNVCDVLNKITEEDVISAGAKQQRPMRLRSKPKPDICKGVSDSVKQKNTIINIDEITSTHDWQYNLRKDADAIVRYLMDRKCDINNFTIQDLIRVMRELNIIRNERQELFELLSHVKGSLSSNSVSVKTSHPLMVIYSHSDNKIGEQLKLLENTYDPSRYQALIDTTRFQSTNFVDMSTSSDMLFRFKDQDSIGYVHPILVALFGVKLPALENAMVLGDSYSLMKQLYNSKKVKPENYMLLINRLTEDSPIIFTGINDSVSSEIHRASIHTMLRKTILNLRLGIFYSKDCDLVDNHLMKIIHINSSQMMADEEQMLASILSIVGFRPALVSITDPYQPLNVVLKPVSYIVVSPSKMITTINNPISINSNSIYSLSFDNTTGRVMFMPANMRYQGTISCRTVDALPVLNSISHDRIINSPVIVNGTLIYYIERRQNKNIVSGECFTGFRSVINDRPMDIANELNINGITYLLKSAVCYKTHDLLSTMSGSCDGGDVFLKGYYTILFTEMGPWMYDPLSIYSKQSRESRLMRVMKNQYYKEHGNDDGMFYDWLKEESTKKLCDIKQQQLMHHTVMFEDDLLSHEEAMNLISRNCCILVYAQDYLPYLATKSITEIFV.

Residues 1–61 (MESDSNIAIE…ITEEDVISAG (61 aa)) constitute a propeptide that is removed on maturation.

Belongs to the poxviridae protein P4b family. Post-translationally, the precursor is cleaved to a mature protein during virion maturation. Proteolytic cleavage of major core proteins P4a (A10L), P4b (A3L), and VP8 (L4R), which occurs at a late stage of core formation, is required for production of infectious mature virions (MV).

It is found in the virion. Its function is as follows. Major component of the virion core that undergoes proteolytic processing during the immature virion (IV) to mature virion (MV) transition. Essential for the formation of a structurally normal core. The sequence is that of Major core protein 4b from Vertebrata (FPV).